The sequence spans 563 residues: Cytochrome b (563 aa).

12 consecutive transmembrane segments (helical) span residues serine 36–tyrosine 61, serine 81–arginine 104, tryptophan 119–serine 141, arginine 193–glycine 220, leucine 255–asparagine 276, isoleucine 326–leucine 345, phenylalanine 358–leucine 379, threonine 387–proline 409, isoleucine 436–isoleucine 454, threonine 458–leucine 476, isoleucine 505–leucine 527, and methionine 539–tyrosine 557. Histidine 87 and histidine 101 together coordinate heme. Histidine 198 and histidine 212 together coordinate heme.

It belongs to the cytochrome b family. As to quaternary structure, it is a component of at least 2 distinct terminal oxidases, the quinol oxidase (SoxABC) and the alternate quinol oxidase with the core components SoxM and a Rieske Fe-S protein.

Its subcellular location is the cell membrane. Functionally, binds 2 heme groups (b586 and b606) which are not covalently bound to the protein. The polypeptide is Cytochrome b (soxC) (Sulfolobus acidocaldarius (strain ATCC 33909 / DSM 639 / JCM 8929 / NBRC 15157 / NCIMB 11770)).